We begin with the raw amino-acid sequence, 535 residues long: Thermosome subunit gamma (535 aa).

It belongs to the TCP-1 chaperonin family. Forms a Heterooligomeric complex of two stacked eight-membered rings.

Molecular chaperone; binds unfolded polypeptides in vitro, and has a weak ATPase activity. The polypeptide is Thermosome subunit gamma (thsC) (Saccharolobus solfataricus (strain ATCC 35092 / DSM 1617 / JCM 11322 / P2) (Sulfolobus solfataricus)).